The sequence spans 842 residues: Leucine--tRNA ligase (842 aa).

The 'HIGH' region motif lies at 44–55 (PYPSANGLHVGH). Residues 619–623 (KMSKS) carry the 'KMSKS' region motif. Lys-622 is an ATP binding site.

The protein belongs to the class-I aminoacyl-tRNA synthetase family.

It localises to the cytoplasm. The catalysed reaction is tRNA(Leu) + L-leucine + ATP = L-leucyl-tRNA(Leu) + AMP + diphosphate. The sequence is that of Leucine--tRNA ligase from Borrelia duttonii (strain Ly).